Reading from the N-terminus, the 88-residue chain is MLTPEDKAAIVAEYATSEGDTGSPEVQVALLTHRITYLTEHFKSHIHDNHSRTGLLRLVSRRRKLLDYLHKKNAQRYFDLIKKLGLRK.

Belongs to the universal ribosomal protein uS15 family. In terms of assembly, part of the 30S ribosomal subunit. Forms a bridge to the 50S subunit in the 70S ribosome, contacting the 23S rRNA.

Functionally, one of the primary rRNA binding proteins, it binds directly to 16S rRNA where it helps nucleate assembly of the platform of the 30S subunit by binding and bridging several RNA helices of the 16S rRNA. Forms an intersubunit bridge (bridge B4) with the 23S rRNA of the 50S subunit in the ribosome. The sequence is that of Small ribosomal subunit protein uS15 from Hydrogenovibrio crunogenus (strain DSM 25203 / XCL-2) (Thiomicrospira crunogena).